Here is a 170-residue protein sequence, read N- to C-terminus: uncharacterized protein (170 aa).

Positions Glu-35 to Asp-57 are disordered.

This is an uncharacterized protein from Candida tsukubaensis (Yeast).